A 205-amino-acid polypeptide reads, in one-letter code: GTP cyclohydrolase-2 (205 aa).

Residue Arg-49 to Glu-53 coordinates GTP. 3 residues coordinate Zn(2+): Cys-54, Cys-65, and Cys-67. Residues Gln-70, Glu-92 to Arg-94, and Thr-114 contribute to the GTP site. Residue Asp-126 is the Proton acceptor of the active site. The active-site Nucleophile is Arg-128. GTP-binding residues include Thr-149 and Lys-154.

The protein belongs to the GTP cyclohydrolase II family. Requires Zn(2+) as cofactor.

It carries out the reaction GTP + 4 H2O = 2,5-diamino-6-hydroxy-4-(5-phosphoribosylamino)-pyrimidine + formate + 2 phosphate + 3 H(+). The protein operates within cofactor biosynthesis; riboflavin biosynthesis; 5-amino-6-(D-ribitylamino)uracil from GTP: step 1/4. In terms of biological role, catalyzes the conversion of GTP to 2,5-diamino-6-ribosylamino-4(3H)-pyrimidinone 5'-phosphate (DARP), formate and pyrophosphate. This Shewanella loihica (strain ATCC BAA-1088 / PV-4) protein is GTP cyclohydrolase-2.